The chain runs to 796 residues: DNA damage-responsive transcriptional repressor RPH1 (796 aa).

The JmjN domain occupies 14–55 (VPVFKPTYEQFEDFYAYCKAINKYGMKSGVVKVIPPKEWKDK). Residues 193–355 (PEGLNVWNVA…IGKKAGKCHC (163 aa)) enclose the JmjC domain. At threonine 399 the chain carries Phosphothreonine. 6 positions are modified to phosphoserine: serine 430, serine 459, serine 557, serine 561, serine 575, and serine 584. A Bipartite nuclear localization signal motif is present at residues 455 to 471 (KRISSFQEQPLNKLLKR). The interval 599 to 692 (RQQHSQQHSF…DKEQGSSPLN (94 aa)) is disordered. A compositionally biased stretch (polar residues) spans 601–621 (QHSQQHSFSTPSTVSNLSTSV). Positions 629–640 (NDIKTPHPERPN) are enriched in basic and acidic residues. Residue serine 652 is modified to Phosphoserine. Residues 654-669 (VETSKSNLILSKVAST) show a composition bias toward polar residues. Positions 670 to 686 (RQEDSFTSRNDDLDKEQ) are enriched in basic and acidic residues. Phosphoserine is present on serine 689. The C2H2-type 1 zinc finger occupies 709–732 (YICKECQRKFSSGHHLTRHKKSVH). A C2H2-type 2; atypical zinc finger spans residues 738–763 (HSCPKCGKRFKRRDHVLQHLNKKIPC). Residues 774–796 (IMNPTVQPQDGKAAINQQSTPLN) are disordered.

Post-translationally, RAD53-dependent phosphorylated in response to DNA damage.

Its subcellular location is the nucleus. In terms of biological role, transcriptional repressor of photolyase PHR1. Recognizes and binds the sequence AG(4) in the upstream repressing sequence of PHR1. Derepresses PHR1 transcription when phosphorylated. The sequence is that of DNA damage-responsive transcriptional repressor RPH1 (RPH1) from Saccharomyces cerevisiae (strain ATCC 204508 / S288c) (Baker's yeast).